Reading from the N-terminus, the 214-residue chain is Mexicain (214 aa).

3 disulfides stabilise this stretch: Cys-22/Cys-63, Cys-56/Cys-95, and Cys-153/Cys-200. Residue Cys-25 is part of the active site. Cys-25 is a binding site for E64. Residues His-159 and Asn-175 contribute to the active site.

It belongs to the peptidase C1 family. As to expression, expressed in latex.

The protein resides in the secreted. Cysteine protease. This is Mexicain from Jacaratia mexicana (Wild papaya).